We begin with the raw amino-acid sequence, 473 residues long: MPQTPPFSAMFDSSGYNRNLYQSAEDSCGGLYYHDNNLLSGSLEALIQHLVPNVDYYPDRTYIFTFLLSSRLFMHPYELMAKVCHLCVEHQRLSEGDGDKNQMRKIAPKILQLLTEWTETFPYDFRDERMMRNLKDLAHRMASGEEQTYRKNVQQMMQCLIRKLAALSQYEEVLAKLSSTATDRLTVLKTKPQSIQRDIMTVCSDPYTLAQQLTHIELERLNYIGPEEFVQAFVQKDPLDNDKSCYSERKKTRNLEAYVEWFNRLSYLVATEICMPVKKKHRARMIEYFIDVARECFNIGNFNSLMAIISGMNMSPVSRLKKTWAKVKTAKFDILEHQMDPSSNFYNYRTALRGAAQRSLTAHSSREKIVIPFFSLLIKDIYFLNEGCVNRLPNGHVNFEKFWELAKQVSEFMTWKQVECPFERDRKVLQYLLSVPVFSEDALYLASYESEGPENNIEKDRWKSLRSSLLGRV.

One can recognise an N-terminal Ras-GEF domain in the interval 34 to 161 (HDNNLLSGSL…NVQQMMQCLI (128 aa)). Residues 205-453 (DPYTLAQQLT…YLASYESEGP (249 aa)) form the Ras-GEF domain.

Interacts with CCDC124 during cytokinesis. Interacts with Ras family proteins. As to expression, constitutively expressed in brain, intestine and testis. Low constitutive expression, if any, in heart, lung, lymph nodes and thymus. Up-regulated in heart, kidney, liver, lymph nodes, spleen and thymus at day 20 after infection with Trypanosoma cruzi. Not detected in muscle.

The protein localises to the early endosome. It is found in the late endosome. It localises to the midbody. Guanine nucleotide exchange factor (GEF) with specificity for RAP2A, it doesn't seems to activate other Ras family proteins (in vitro). In Mus musculus (Mouse), this protein is Ras-GEF domain-containing family member 1B (Rasgef1b).